The primary structure comprises 214 residues: Octanoyltransferase (214 aa).

In terms of domain architecture, BPL/LPL catalytic spans serine 29 to threonine 214. Substrate is bound by residues arginine 69 to histidine 76, alanine 146 to glycine 148, and glycine 159 to alanine 161. Cysteine 177 serves as the catalytic Acyl-thioester intermediate.

The protein belongs to the LipB family.

It is found in the cytoplasm. The enzyme catalyses octanoyl-[ACP] + L-lysyl-[protein] = N(6)-octanoyl-L-lysyl-[protein] + holo-[ACP] + H(+). Its pathway is protein modification; protein lipoylation via endogenous pathway; protein N(6)-(lipoyl)lysine from octanoyl-[acyl-carrier-protein]: step 1/2. In terms of biological role, catalyzes the transfer of endogenously produced octanoic acid from octanoyl-acyl-carrier-protein onto the lipoyl domains of lipoate-dependent enzymes. Lipoyl-ACP can also act as a substrate although octanoyl-ACP is likely to be the physiological substrate. The chain is Octanoyltransferase from Polynucleobacter asymbioticus (strain DSM 18221 / CIP 109841 / QLW-P1DMWA-1) (Polynucleobacter necessarius subsp. asymbioticus).